A 378-amino-acid polypeptide reads, in one-letter code: RNA polymerase sigma factor SigA (378 aa).

A disordered region spans residues 1–29 (MKNKTEVKNGGEKKNSKKVSKEESAKEKN). Residues 145–215 (LAEANLRLVV…TRAIADQART (71 aa)) form a sigma-70 factor domain-2 region. An Interaction with polymerase core subunit RpoC motif is present at residues 169 to 172 (DLIQ). Residues 224–300 (ETINKLIRVS…DDEAPAPADA (77 aa)) are sigma-70 factor domain-3. Positions 313–366 (ILNTLTPREEKVLRLRFGLDDGRARTLEEVGKEFNVTRERIRQIEAKALRKLRH) are sigma-70 factor domain-4. Positions 339 to 358 (LEEVGKEFNVTRERIRQIEA) form a DNA-binding region, H-T-H motif.

Belongs to the sigma-70 factor family. RpoD/SigA subfamily. Interacts transiently with the RNA polymerase catalytic core.

It localises to the cytoplasm. Sigma factors are initiation factors that promote the attachment of RNA polymerase to specific initiation sites and are then released. This sigma factor is the primary sigma factor during exponential growth. The chain is RNA polymerase sigma factor SigA from Clostridium acetobutylicum (strain ATCC 824 / DSM 792 / JCM 1419 / IAM 19013 / LMG 5710 / NBRC 13948 / NRRL B-527 / VKM B-1787 / 2291 / W).